The sequence spans 1241 residues: Nephrin (1241 aa).

The signal sequence occupies residues 1–22 (MALGTTLRASLLLLGLLTEGLA). The Extracellular segment spans residues 23-1055 (QLAIPASVPR…EDQLPTEPPS (1033 aa)). Ig-like C2-type domains are found at residues 27 to 130 (PASV…VILS), 143 to 234 (EAGT…SFTV), 242 to 333 (PPVI…HGIT), 340 to 434 (PSAI…KSLI), 440 to 540 (PAQK…TQLA), and 544 to 635 (PPTN…ETVS). The N-linked (GlcNAc...) asparagine glycan is linked to Asn40. Cystine bridges form between Cys53/Cys111, Cys160/Cys217, and Cys265/Cys317. N-linked (GlcNAc...) asparagine glycans are attached at residues Asn356 and Asn401. Cys361 and Cys417 are joined by a disulfide. Ser432 is modified (phosphoserine). Cysteines 465 and 528 form a disulfide. Asn547, Asn553, Asn564, Asn577, Asn680, and Asn708 each carry an N-linked (GlcNAc...) asparagine glycan. Residues Cys567 and Cys623 are joined by a disulfide bond. 2 Ig-like C2-type domains span residues 740-832 (PTIR…LLRL) and 838-939 (PQVE…VSIS). 2 disulfide bridges follow: Cys761–Cys816 and Cys863–Cys920. N-linked (GlcNAc...) asparagine glycosylation is present at Asn908. The region spanning 943–1038 (PPSGLKVVSL…TQLPITTPGL (96 aa)) is the Fibronectin type-III domain. Residues 1025 to 1057 (ADKGTQLPITTPGLHQPSGEPEDQLPTEPPSGP) form a disordered region. A helical transmembrane segment spans residues 1056–1076 (GPSGLPLLPVLFALGGLLLLS). The Cytoplasmic segment spans residues 1077–1241 (NASCVGGVLW…LPFELRGHLV (165 aa)). Ser1098 carries the post-translational modification Phosphoserine. Residues 1099 to 1114 (EKTEAGSEEDRVRNEY) are compositionally biased toward basic and acidic residues. The interval 1099-1137 (EKTEAGSEEDRVRNEYEESQWTGERDTQSSTVSTTEAEP) is disordered. Thr1101 carries the post-translational modification Phosphothreonine. Residue Ser1105 is modified to Phosphoserine. The segment at 1160 to 1241 (RGFTGEDEDM…LPFELRGHLV (82 aa)) is binds to NPHS2. Tyr1193 is modified (phosphotyrosine; by FYN).

The protein belongs to the immunoglobulin superfamily. In terms of assembly, interacts with CD2AP (via C-terminal domain). Interacts with MAGI1 (via PDZ 2 and 3 domains) forming a tripartite complex with IGSF5/JAM4. Interacts with DDN; the interaction is direct. Self-associates (via the Ig-like domains). Also interacts (via the Ig-like domains) with KIRREL1/NEPH1 and KIRREL2; the interaction with KIRREL1 is dependent on KIRREL1 glycosylation. Interacts with KIRREL3. Forms a complex with ACTN4, CASK, IQGAP1, MAGI2, SPTAN1 and SPTBN1. Interacts with NPHS2. Interacts with phosphatidylinositol 3-kinase regulatory subunit PIK3R1; the interaction is reduced by high glucose levels. In terms of processing, phosphorylated at Tyr-1193 by FYN, leading to the recruitment and activation of phospholipase C-gamma-1/PLCG1. Tyrosine phosphorylation is reduced by high glucose levels. Dephosphorylated by tensin TNS2 which leads to reduced binding of NPHN1 to PIK3R1. As to expression, specifically expressed in podocytes of kidney glomeruli.

It localises to the cell membrane. Functionally, seems to play a role in the development or function of the kidney glomerular filtration barrier. Regulates glomerular vascular permeability. May anchor the podocyte slit diaphragm to the actin cytoskeleton. Plays a role in skeletal muscle formation through regulation of myoblast fusion. This Homo sapiens (Human) protein is Nephrin (NPHS1).